Consider the following 937-residue polypeptide: Translation initiation factor IF-2 (937 aa).

Disordered stretches follow at residues 157–230 (KEAQ…AARK) and 250–346 (IKAP…ESNF). Residues 173–205 (EAQKADAAKPVEAKADESAQEEKKRVAAEESKK) are compositionally biased toward basic and acidic residues. Low complexity predominate over residues 252-265 (APEPAAPVAAKPAE). Residues 267–293 (TLHKPADKKAGEKKDEKKPAVTADKKS) show a composition bias toward basic and acidic residues. A compositionally biased stretch (polar residues) spans 295 to 304 (KSANVSSTWQ). One can recognise a tr-type G domain in the interval 437 to 606 (PRAPVVTVMG…LLQAEVLELK (170 aa)). The interval 446–453 (GHVDHGKT) is G1. 446-453 (GHVDHGKT) lines the GTP pocket. Positions 471–475 (GITQH) are G2. Residues 492 to 495 (DTPG) form a G3 region. GTP contacts are provided by residues 492 to 496 (DTPGH) and 546 to 549 (NKID). The tract at residues 546 to 549 (NKID) is G4. Residues 582–584 (SAK) are G5.

The protein belongs to the TRAFAC class translation factor GTPase superfamily. Classic translation factor GTPase family. IF-2 subfamily.

It is found in the cytoplasm. One of the essential components for the initiation of protein synthesis. Protects formylmethionyl-tRNA from spontaneous hydrolysis and promotes its binding to the 30S ribosomal subunits. Also involved in the hydrolysis of GTP during the formation of the 70S ribosomal complex. This is Translation initiation factor IF-2 from Janthinobacterium sp. (strain Marseille) (Minibacterium massiliensis).